Here is a 148-residue protein sequence, read N- to C-terminus: 3-dehydroquinate dehydratase (148 aa).

The active-site Proton acceptor is tyrosine 26. Asparagine 75, histidine 81, and aspartate 88 together coordinate substrate. Residue histidine 101 is the Proton donor of the active site. Residues 102-103 and arginine 112 contribute to the substrate site; that span reads LS.

It belongs to the type-II 3-dehydroquinase family. Homododecamer.

The catalysed reaction is 3-dehydroquinate = 3-dehydroshikimate + H2O. Its pathway is metabolic intermediate biosynthesis; chorismate biosynthesis; chorismate from D-erythrose 4-phosphate and phosphoenolpyruvate: step 3/7. Catalyzes a trans-dehydration via an enolate intermediate. The sequence is that of 3-dehydroquinate dehydratase from Shewanella frigidimarina (strain NCIMB 400).